The primary structure comprises 454 residues: GTPase Der (454 aa).

2 EngA-type G domains span residues 4–167 (AIVA…SEDK) and 188–363 (LQLA…ASWQ). GTP is bound by residues 10 to 17 (GKPNVGKS), 56 to 60 (DTPGL), 121 to 124 (NKTE), 194 to 201 (GRPNCGKS), 241 to 245 (DTAGV), and 306 to 309 (NKCD). The region spanning 364 to 450 (KRVTTGTLNQ…PVRLSFVKGK (87 aa)) is the KH-like domain.

This sequence belongs to the TRAFAC class TrmE-Era-EngA-EngB-Septin-like GTPase superfamily. EngA (Der) GTPase family. Associates with the 50S ribosomal subunit.

In terms of biological role, GTPase that plays an essential role in the late steps of ribosome biogenesis. The chain is GTPase Der from Orientia tsutsugamushi (strain Boryong) (Rickettsia tsutsugamushi).